A 165-amino-acid polypeptide reads, in one-letter code: 6,7-dimethyl-8-ribityllumazine synthase (165 aa).

Residues F24, 62-64, and 86-88 each bind 5-amino-6-(D-ribitylamino)uracil; these read AFE and AVI. 91-92 contacts (2S)-2-hydroxy-3-oxobutyl phosphate; it reads DT. H94 (proton donor) is an active-site residue. F119 lines the 5-amino-6-(D-ribitylamino)uracil pocket. R133 provides a ligand contact to (2S)-2-hydroxy-3-oxobutyl phosphate.

Belongs to the DMRL synthase family.

The catalysed reaction is (2S)-2-hydroxy-3-oxobutyl phosphate + 5-amino-6-(D-ribitylamino)uracil = 6,7-dimethyl-8-(1-D-ribityl)lumazine + phosphate + 2 H2O + H(+). The protein operates within cofactor biosynthesis; riboflavin biosynthesis; riboflavin from 2-hydroxy-3-oxobutyl phosphate and 5-amino-6-(D-ribitylamino)uracil: step 1/2. Functionally, catalyzes the formation of 6,7-dimethyl-8-ribityllumazine by condensation of 5-amino-6-(D-ribitylamino)uracil with 3,4-dihydroxy-2-butanone 4-phosphate. This is the penultimate step in the biosynthesis of riboflavin. This chain is 6,7-dimethyl-8-ribityllumazine synthase, found in Prochlorococcus marinus (strain MIT 9313).